The chain runs to 129 residues: Glycine cleavage system H protein (129 aa).

Positions Leu24–Arg106 constitute a Lipoyl-binding domain. Lys65 carries the post-translational modification N6-lipoyllysine.

It belongs to the GcvH family. In terms of assembly, the glycine cleavage system is composed of four proteins: P, T, L and H. (R)-lipoate serves as cofactor.

In terms of biological role, the glycine cleavage system catalyzes the degradation of glycine. The H protein shuttles the methylamine group of glycine from the P protein to the T protein. The polypeptide is Glycine cleavage system H protein (Synechococcus sp. (strain CC9311)).